Here is a 422-residue protein sequence, read N- to C-terminus: Serine hydroxymethyltransferase (422 aa).

(6S)-5,6,7,8-tetrahydrofolate-binding positions include leucine 113 and glycine 117 to leucine 119. Lysine 222 bears the N6-(pyridoxal phosphate)lysine mark.

It belongs to the SHMT family. In terms of assembly, homodimer. The cofactor is pyridoxal 5'-phosphate.

It localises to the cytoplasm. The catalysed reaction is (6R)-5,10-methylene-5,6,7,8-tetrahydrofolate + glycine + H2O = (6S)-5,6,7,8-tetrahydrofolate + L-serine. It functions in the pathway one-carbon metabolism; tetrahydrofolate interconversion. Its pathway is amino-acid biosynthesis; glycine biosynthesis; glycine from L-serine: step 1/1. Its function is as follows. Catalyzes the reversible interconversion of serine and glycine with tetrahydrofolate (THF) serving as the one-carbon carrier. This reaction serves as the major source of one-carbon groups required for the biosynthesis of purines, thymidylate, methionine, and other important biomolecules. Also exhibits THF-independent aldolase activity toward beta-hydroxyamino acids, producing glycine and aldehydes, via a retro-aldol mechanism. The polypeptide is Serine hydroxymethyltransferase (Amoebophilus asiaticus (strain 5a2)).